An 89-amino-acid polypeptide reads, in one-letter code: Small ribosomal subunit protein uS15 (89 aa).

Belongs to the universal ribosomal protein uS15 family. As to quaternary structure, part of the 30S ribosomal subunit. Forms a bridge to the 50S subunit in the 70S ribosome, contacting the 23S rRNA.

Its function is as follows. One of the primary rRNA binding proteins, it binds directly to 16S rRNA where it helps nucleate assembly of the platform of the 30S subunit by binding and bridging several RNA helices of the 16S rRNA. Forms an intersubunit bridge (bridge B4) with the 23S rRNA of the 50S subunit in the ribosome. This chain is Small ribosomal subunit protein uS15, found in Gluconacetobacter diazotrophicus (strain ATCC 49037 / DSM 5601 / CCUG 37298 / CIP 103539 / LMG 7603 / PAl5).